The following is a 250-amino-acid chain: tRNA pseudouridine synthase A (250 aa).

The Nucleophile role is filled by aspartate 52. Tyrosine 110 lines the substrate pocket.

The protein belongs to the tRNA pseudouridine synthase TruA family. As to quaternary structure, homodimer.

The catalysed reaction is uridine(38/39/40) in tRNA = pseudouridine(38/39/40) in tRNA. In terms of biological role, formation of pseudouridine at positions 38, 39 and 40 in the anticodon stem and loop of transfer RNAs. This is tRNA pseudouridine synthase A from Citrifermentans bemidjiense (strain ATCC BAA-1014 / DSM 16622 / JCM 12645 / Bem) (Geobacter bemidjiensis).